A 119-amino-acid polypeptide reads, in one-letter code: DNA-binding protein TubR (119 aa).

Homodimer. Binds to TubZ filaments via the C-terminus of TubZ. DNA is not required for binding to TubZ.

A DNA-binding protein that is part of the type III plasmid partition system used to ensure correct segregation of the pBc10987 plasmid. Binds TubZ filaments but does not influence the GTPase activity of TubZ with or without DNA. Cooperatively binds to multiple regions in tubC (centromere-like site) upstream of its own gene with consensus sequence N(T/A)ATTNC(C/G)GNAAT(A/T)N; probably forms an extended DNA-protein filament. Binds sites in its own promoter region and presumably represses its expression; its effect on RNA expression has not been shown. Does not specifically bind to the putative origin of replication on pBc10987. The protein is DNA-binding protein TubR of Bacillus cereus (strain ATCC 10987 / NRS 248).